Here is a 205-residue protein sequence, read N- to C-terminus: GTP-binding protein rho3 (205 aa).

20-27 (GDGAAGKT) is a binding site for GTP. Residues 42 to 50 (YEPTIFENY) carry the Effector region motif. GTP-binding positions include 67 to 71 (DTAGQ) and 125 to 128 (LKCD). At Cys-202 the chain carries Cysteine methyl ester. Cys-202 carries S-geranylgeranyl cysteine lipidation. Positions 203-205 (IIA) are cleaved as a propeptide — removed in mature form.

Belongs to the small GTPase superfamily. Rho family. As to quaternary structure, interacts with for3. Post-translationally, palmitoylated by the erf2-erf4 complex.

It is found in the cell membrane. Its function is as follows. Involved in controlling cell shape and septation. Regulates cell separation by modulating the function of the exocyst complex. Involved in post-Golgi vesicle transport. Involved in driving sexual development in a palmitoylation-dependent manner. The protein is GTP-binding protein rho3 (rho3) of Schizosaccharomyces pombe (strain 972 / ATCC 24843) (Fission yeast).